A 249-amino-acid polypeptide reads, in one-letter code: uncharacterized protein (249 aa).

Its subcellular location is the cytoplasm. The protein localises to the nucleus. This is an uncharacterized protein from Schizosaccharomyces pombe (strain 972 / ATCC 24843) (Fission yeast).